Reading from the N-terminus, the 586-residue chain is Ezrin (586 aa).

The region spanning 2-295 (PKPINVRVTT…GNHELYMRRR (294 aa)) is the FERM domain. Lysine 60 carries the post-translational modification N6-acetyllysine. Positions 115–120 (IYCPPE) match the [IL]-x-C-x-x-[DE] motif motif. Tyrosine 146 is subject to Phosphotyrosine; by PDGFR. The segment at 244–586 (EIRNISFNDK…KQRIDEFEAM (343 aa)) is interaction with SCYL3. Residues 302-462 (VQQMKAQARE…QDDLVKTKEE (161 aa)) are a coiled coil. Residues 306–338 (KAQAREEKHQKQLERQQLETEKKRRETVEREKE) are disordered. Residues 308–338 (QAREEKHQKQLERQQLETEKKRRETVEREKE) show a composition bias toward basic and acidic residues. A Phosphoserine modification is found at serine 366. Tyrosine 478 carries the phosphotyrosine modification. At serine 535 the chain carries Phosphoserine. Threonine 567 carries the phosphothreonine; by ROCK2 and PKC/PRKCI modification.

Interacts with PODXL and NHERF2. Found in a complex with EZR, PODXL and NHERF2. Interacts with PALS1. Interacts with MCC, PLEKHG6, SCYL3/PACE1, NHERF1 and TMEM8B. Interacts (when phosphorylated) with FES/FPS. Interacts with dimeric S100P, the interaction may be activating through unmasking of F-actin binding sites. Identified in complexes that contain VIM, EZR, AHNAK, BFSP1, BFSP2, ANK2, PLEC, PRX and spectrin. Detected in a complex composed of at least EZR, AHNAK, PPL and PRX. Interacts with PDPN (via cytoplasmic domain); activates RHOA and promotes epithelial-mesenchymal transition. Interacts with SPN/CD43 cytoplasmic tail, CD44 and ICAM2. Interacts with SLC9A3; interaction targets SLC9A3 to the apical membrane. Interacts with SLC9A1; regulates interactions of SLC9A1 with cytoskeletal and promotes stress fiber formation. Interacts with CLIC5; may work together in a complex which also includes RDX and MYO6 to stabilize linkages between the plasma membrane and subjacent actin cytoskeleton at the base of stereocilia. In terms of processing, phosphorylated by tyrosine-protein kinases. Phosphorylation by ROCK2 suppresses the head-to-tail association of the N-terminal and C-terminal halves resulting in an opened conformation which is capable of actin and membrane-binding. S-nitrosylation is induced by interferon-gamma and oxidatively-modified low-densitity lipoprotein (LDL(ox)) possibly implicating the iNOS-S100A8/9 transnitrosylase complex. In terms of tissue distribution, glomerular epithelium cell (podocyte). Expressed in cerebrum, cerebellum and hippocampus (at protein level). Expressed in the small intestine, lung, kidney and ovaries.

It localises to the apical cell membrane. Its subcellular location is the cell projection. The protein resides in the microvillus membrane. It is found in the ruffle membrane. The protein localises to the cytoplasm. It localises to the cell cortex. Its subcellular location is the cytoskeleton. The protein resides in the microvillus. Its activity is regulated as follows. A head-to-tail association, of the N-terminal and C-terminal halves results in a closed conformation (inactive form) which is incapable of actin or membrane-binding. Functionally, probably involved in connections of major cytoskeletal structures to the plasma membrane. In epithelial cells, required for the formation of microvilli and membrane ruffles on the apical pole. Along with PLEKHG6, required for normal macropinocytosis. This chain is Ezrin (Ezr), found in Rattus norvegicus (Rat).